Consider the following 323-residue polypeptide: Serine/threonine-protein phosphatase PP1-gamma catalytic subunit (323 aa).

The residue at position 2 (A2) is an N-acetylalanine. Mn(2+) is bound by residues D64, H66, D92, and N124. H125 acts as the Proton donor in catalysis. Mn(2+) contacts are provided by H173 and H248. The segment at 302–323 (KKPNATRPVTPPRGMITKQAKK) is disordered. T307 and T311 each carry phosphothreonine.

Belongs to the PPP phosphatase family. PP-1 subfamily. In terms of assembly, PP1 comprises a catalytic subunit, PPP1CA, PPP1CB or PPP1CC, which is folded into its native form by inhibitor 2 and glycogen synthetase kinase 3, and then complexed to one or several targeting or regulatory subunits. PPP1R12A, PPP1R12B and PPP1R12C mediate binding to myosin. PPP1R3A (in skeletal muscle), PPP1R3B (in liver), PPP1R3C, PPP1R3D and PPP1R3F (in brain) mediate binding to glycogen. Interacts with cyanobacterial toxin microcystin; disulfide-linked. Interacts with PPP1R3B and PPP1R7. Isoform 2 interacts with SPZ1. Interacts with CDCA2. PPP1R15A and PPP1R15B mediate binding to EIF2S1. Part of a complex containing PPP1R15B, PP1 and NCK1/2. Interacts with IKFZ1; the interaction targets PPP1CC to pericentromeric heterochromatin, dephosphorylates IKAROS, stabilizes it and prevents it from degradation. Interacts with PPP1R42; the interaction is direct. Interacts with NOM1 and PPP1R8. Component of the PTW/PP1 phosphatase complex, composed of PPP1R10/PNUTS, TOX4, WDR82, and PPP1CA or PPP1CB or PPP1CC. Interacts with PPP1R8. Interacts with isoform 1 and isoform 4 NEK2. Interacts with URI1; the interaction is phosphorylation-dependent and occurs in a growth factor-dependent manner. Interacts with FOXP3. Interacts with TMEM225 (via RVxF motif). Interacts with MKI67. Interacts with RRP1B; this targets PPP1CC to the nucleolus. Interacts with PPP1R2B. Found in a complex with PPP1CA, PPP1CC, SHC1 and PEAK1. Interacts with DYNLT4. Interacts (via RVxF motif) with FIRRM; regulates PLK1 kinase activity. Interacts with the KNL1 complex subunit KNL1; the interaction is direct and mutually exclusive with KNL1 binding to microtubules. Component of the SHOC2-MRAS-PP1c (SMP) complex consisting of SHOC2, GTP-bound M-Ras/MRAS and the catalytic subunit of protein phosphatase 1 (either PPP1CA, PPP1CB or PPP1CC). SHOC2 and PP1c preferably bind M-Ras/MRAS, but they also bind K-Ras/KRAS, N-Ras/NRAS and H-Ras/HRAS; these interactions are GTP-dependent and both SHOC2 and PP1c are required to form a stable complex. Interacts with SHOC2 in the absence of Ras GTPases. The cofactor is Mn(2+). In terms of processing, phosphorylated by NEK2.

Its subcellular location is the cytoplasm. It is found in the nucleus. The protein resides in the nucleolus. It localises to the nucleoplasm. The protein localises to the nucleus speckle. Its subcellular location is the chromosome. It is found in the centromere. The protein resides in the kinetochore. It localises to the cleavage furrow. The protein localises to the midbody. Its subcellular location is the mitochondrion. It is found in the cytoskeleton. The protein resides in the microtubule organizing center. The enzyme catalyses O-phospho-L-seryl-[protein] + H2O = L-seryl-[protein] + phosphate. It catalyses the reaction O-phospho-L-threonyl-[protein] + H2O = L-threonyl-[protein] + phosphate. Inactivated by binding to URI1. The phosphatase activity of the PPP1R15A-PP1 complex toward EIF2S1 is specifically inhibited by Salubrinal, a drug that protects cells from endoplasmic reticulum stress. In terms of biological role, protein phosphatase that associates with over 200 regulatory proteins to form highly specific holoenzymes which dephosphorylate hundreds of biological targets. Protein phosphatase 1 (PP1) is essential for cell division, and participates in the regulation of glycogen metabolism, muscle contractility and protein synthesis. Dephosphorylates RPS6KB1. Involved in regulation of ionic conductances and long-term synaptic plasticity. May play an important role in dephosphorylating substrates such as the postsynaptic density-associated Ca(2+)/calmodulin dependent protein kinase II. Component of the PTW/PP1 phosphatase complex, which plays a role in the control of chromatin structure and cell cycle progression during the transition from mitosis into interphase. In balance with CSNK1D and CSNK1E, determines the circadian period length, through the regulation of the speed and rhythmicity of PER1 and PER2 phosphorylation. May dephosphorylate CSNK1D and CSNK1E. Regulates the recruitment of the SKA complex to kinetochores. Dephosphorylates the 'Ser-418' residue of FOXP3 in regulatory T-cells (Treg) from patients with rheumatoid arthritis, thereby inactivating FOXP3 and rendering Treg cells functionally defective. Together with PPP1CA (PP1-alpha subunit), dephosphorylates IFIH1/MDA5 and RIG-I leading to their activation and a functional innate immune response. Core component of the SHOC2-MRAS-PP1c (SMP) holophosphatase complex that regulates the MAPK pathway activation. The SMP complex specifically dephosphorylates the inhibitory phosphorylation at 'Ser-259' of RAF1 kinase, 'Ser-365' of BRAF kinase and 'Ser-214' of ARAF kinase, stimulating their kinase activities. Dephosphorylates MKI67 at the onset of anaphase. The SMP complex enhances the dephosphorylation activity and substrate specificity of PP1c. In Homo sapiens (Human), this protein is Serine/threonine-protein phosphatase PP1-gamma catalytic subunit (PPP1CC).